The sequence spans 150 residues: MIVTLTDQPFEPGVLVSAFCAGREETGAVATFIGLARAEQGAARALELEAYPGFTDAAITEIAQGAVTRFALQDVHIVHRVGVIAPGEAIVFVATAAAHRREAFEACDYLMDYLKSRAPFWKKEHGPEGPRWIEPTARDRTDAQRWDQEA.

Residues 35 to 37 (LAR), 99 to 100 (HR), K115, and 122 to 124 (KKE) each bind substrate. Positions 124 to 150 (EHGPEGPRWIEPTARDRTDAQRWDQEA) are disordered. The span at 136–150 (TARDRTDAQRWDQEA) shows a compositional bias: basic and acidic residues.

It belongs to the MoaE family. In terms of assembly, heterotetramer of 2 MoaD subunits and 2 MoaE subunits. Also stable as homodimer. The enzyme changes between these two forms during catalysis.

It catalyses the reaction 2 [molybdopterin-synthase sulfur-carrier protein]-C-terminal-Gly-aminoethanethioate + cyclic pyranopterin phosphate + H2O = molybdopterin + 2 [molybdopterin-synthase sulfur-carrier protein]-C-terminal Gly-Gly + 2 H(+). Its pathway is cofactor biosynthesis; molybdopterin biosynthesis. In terms of biological role, converts molybdopterin precursor Z into molybdopterin. This requires the incorporation of two sulfur atoms into precursor Z to generate a dithiolene group. The sulfur is provided by MoaD. The polypeptide is Molybdopterin synthase catalytic subunit (moaE) (Caulobacter vibrioides (strain ATCC 19089 / CIP 103742 / CB 15) (Caulobacter crescentus)).